The following is a 365-amino-acid chain: Histidinol-phosphate aminotransferase (365 aa).

Residue Lys221 is modified to N6-(pyridoxal phosphate)lysine.

It belongs to the class-II pyridoxal-phosphate-dependent aminotransferase family. Histidinol-phosphate aminotransferase subfamily. Homodimer. It depends on pyridoxal 5'-phosphate as a cofactor.

The enzyme catalyses L-histidinol phosphate + 2-oxoglutarate = 3-(imidazol-4-yl)-2-oxopropyl phosphate + L-glutamate. It participates in amino-acid biosynthesis; L-histidine biosynthesis; L-histidine from 5-phospho-alpha-D-ribose 1-diphosphate: step 7/9. This chain is Histidinol-phosphate aminotransferase, found in Rhodopseudomonas palustris (strain HaA2).